The following is a 156-amino-acid chain: Small ribosomal subunit protein uS7 (156 aa).

This sequence belongs to the universal ribosomal protein uS7 family. As to quaternary structure, part of the 30S ribosomal subunit. Contacts proteins S9 and S11.

Functionally, one of the primary rRNA binding proteins, it binds directly to 16S rRNA where it nucleates assembly of the head domain of the 30S subunit. Is located at the subunit interface close to the decoding center, probably blocks exit of the E-site tRNA. This chain is Small ribosomal subunit protein uS7, found in Picosynechococcus sp. (strain ATCC 27264 / PCC 7002 / PR-6) (Agmenellum quadruplicatum).